The sequence spans 539 residues: Tripartite motif-containing protein 26 (539 aa).

Residues 16-57 form an RING-type zinc finger; sequence CSICLDYLRDPVTIDCGHVFCRSCTTDVRPISGSRPVCPLCK. A B box-type zinc finger spans residues 97–138; it reads QDAKLCERHREKLHYYCEDDGKLLCVMCRESREHRPHTAVLM. Cysteine 102, histidine 105, cysteine 124, and histidine 130 together coordinate Zn(2+). Residues 188-227 adopt a coiled-coil conformation; it reads IVAEFEQGHQFLREREEHLLEQLAKLEQELTEGREKFKSR. In terms of domain architecture, B30.2/SPRY spans 295-539; that stretch reads RGLREFQGKL…WPGTRLLLRP (245 aa). A disordered region spans residues 376-437; that stretch reads REGWSEDEEE…EEEEEVLESC (62 aa). The segment covering 380-434 has biased composition (acidic residues); that stretch reads SEDEEEGDEEEEGEEEEEEEEAGYGDGYDDWETDEDEESLGDEEEEEEEEEEEVL.

This sequence belongs to the TRIM/RBCC family. In terms of assembly, interacts with TBK1; this interaction bridges together TBK1 and NEMO in order to activate TBK1. Interacts with INCA1. Autoubiquitinates upon viral infection. In turn, autoubiquitinated TRIM26 recruits NEMO and bridges TBK1-NEMO interaction.

It localises to the cytoplasm. It is found in the nucleus. The catalysed reaction is S-ubiquitinyl-[E2 ubiquitin-conjugating enzyme]-L-cysteine + [acceptor protein]-L-lysine = [E2 ubiquitin-conjugating enzyme]-L-cysteine + N(6)-ubiquitinyl-[acceptor protein]-L-lysine.. Functionally, E3 ubiquitin-protein ligase which regulates the IFN-beta production and antiviral response downstream of various DNA-encoded pattern-recognition receptors (PRRs). Also plays a central role in determining the response to different forms of oxidative stress by controlling levels of DNA glycosylases NEIL1, NEIL3 and NTH1 that are involved in repair of damaged DNA. Promotes nuclear IRF3 ubiquitination and proteasomal degradation. Bridges together TBK1 and NEMO during the innate response to viral infection leading to the activation of TBK1. Positively regulates LPS-mediated inflammatory innate immune response by catalyzing the 'Lys-11'-linked polyubiquitination of TAB1 to enhance its activation and subsequent NF-kappa-B and MAPK signaling. In a manner independent of its catalytic activity, inhibits WWP2, a SOX2-directed E3 ubiquitin ligase, and thus protects SOX2 from polyubiquitination and proteasomal degradation. Ubiquitinates the histone acetyltransferase protein complex component PHF20 and thereby triggers its degradation in the nucleus after its recruitment by the histone demethylase KDM6B, serving as a scaffold protein. Upon induction by TGF-beta, ubiquitinates the TFIID component TAF7 for proteasomal degradation. Induces ferroptosis by ubiquitinating SLC7A11, a critical protein for lipid reactive oxygen species (ROS) scavenging. The polypeptide is Tripartite motif-containing protein 26 (TRIM26) (Pan troglodytes (Chimpanzee)).